Here is a 73-residue protein sequence, read N- to C-terminus: Translation initiation factor IF-1 (73 aa).

Positions 1–73 (MGKKEEAFEV…TKGRIVYRER (73 aa)) constitute an S1-like domain.

The protein belongs to the IF-1 family. In terms of assembly, component of the 30S ribosomal translation pre-initiation complex which assembles on the 30S ribosome in the order IF-2 and IF-3, IF-1 and N-formylmethionyl-tRNA(fMet); mRNA recruitment can occur at any time during PIC assembly.

The protein resides in the cytoplasm. Functionally, one of the essential components for the initiation of protein synthesis. Stabilizes the binding of IF-2 and IF-3 on the 30S subunit to which N-formylmethionyl-tRNA(fMet) subsequently binds. Helps modulate mRNA selection, yielding the 30S pre-initiation complex (PIC). Upon addition of the 50S ribosomal subunit IF-1, IF-2 and IF-3 are released leaving the mature 70S translation initiation complex. In Rhodopirellula baltica (strain DSM 10527 / NCIMB 13988 / SH1), this protein is Translation initiation factor IF-1.